Reading from the N-terminus, the 124-residue chain is Large ribosomal subunit protein bL12 (124 aa).

It belongs to the bacterial ribosomal protein bL12 family. In terms of assembly, homodimer. Part of the ribosomal stalk of the 50S ribosomal subunit. Forms a multimeric L10(L12)X complex, where L10 forms an elongated spine to which 2 to 4 L12 dimers bind in a sequential fashion. Binds GTP-bound translation factors.

Its function is as follows. Forms part of the ribosomal stalk which helps the ribosome interact with GTP-bound translation factors. Is thus essential for accurate translation. The sequence is that of Large ribosomal subunit protein bL12 from Leptothrix cholodnii (strain ATCC 51168 / LMG 8142 / SP-6) (Leptothrix discophora (strain SP-6)).